The sequence spans 274 residues: Ribosomal RNA small subunit methyltransferase A (274 aa).

S-adenosyl-L-methionine is bound by residues H15, L17, G42, E64, D89, and N108.

This sequence belongs to the class I-like SAM-binding methyltransferase superfamily. rRNA adenine N(6)-methyltransferase family. RsmA subfamily.

Its subcellular location is the cytoplasm. The enzyme catalyses adenosine(1518)/adenosine(1519) in 16S rRNA + 4 S-adenosyl-L-methionine = N(6)-dimethyladenosine(1518)/N(6)-dimethyladenosine(1519) in 16S rRNA + 4 S-adenosyl-L-homocysteine + 4 H(+). Its function is as follows. Specifically dimethylates two adjacent adenosines (A1518 and A1519) in the loop of a conserved hairpin near the 3'-end of 16S rRNA in the 30S particle. May play a critical role in biogenesis of 30S subunits. The chain is Ribosomal RNA small subunit methyltransferase A from Prochlorococcus marinus (strain AS9601).